A 173-amino-acid polypeptide reads, in one-letter code: uncharacterized protein (173 aa).

The protein belongs to the ycf73 family.

It is found in the plastid. The protein resides in the chloroplast. This is an uncharacterized protein from Saccharum hybrid (Sugarcane).